Here is a 477-residue protein sequence, read N- to C-terminus: MFRRCAVKLNPYDVVVIGGGPGGYVASIKAAQLGMKTACVEKRGALGGTCLNVGCIPSKALLHATHVYHDAHANFARYGLMGGEGVTMDSAKMQQQKERAVKGLTGGVEYLFKKNKVTYYKGEGSFETAHSIRVNGLDGKQEMFETKKTIIATGSEPTELPFLPFDEKVVLSSTGALALPRVPKTMVVIGGGVIGLELGSVWARLGAKVTVVEFAPRCAPTLDEDVTNALVGALAKNEKMKFMTSTKVVGGTNNGDSVSLEVEGKNGKRETVTCEALLVSVGRRPFTGGLGLDKINVAKNERGFVKIGDHFETSIPDVYAIGDVVDKGPMLAHKAEDEGVACAEILAGKPGHVNYGVIPAVIYTMPEVASVGKSEEELKKEGVAYKVGKFPFNANSRAKAVSTEDGFVKVLVDKATDRILGVHIVCTTAGELIGEACLAMEYGASSEDVGRTCHAHPTMSEALKEACMALVAKTINF.

FAD is bound by residues 41 to 50, K59, G124, and 153 to 155; these read EKRGALGGTC and TGS. Cysteines 50 and 55 form a disulfide. Residues 190-197, E213, V248, and G282 each bind NAD(+); that span reads GGGVIGLE. Residues D323 and 330-333 each bind FAD; that span reads MLAH. The active-site Proton acceptor is the H456.

It belongs to the class-I pyridine nucleotide-disulfide oxidoreductase family. Homodimer. FAD serves as cofactor.

It carries out the reaction N(6)-[(R)-dihydrolipoyl]-L-lysyl-[protein] + NAD(+) = N(6)-[(R)-lipoyl]-L-lysyl-[protein] + NADH + H(+). In Trypanosoma cruzi, this protein is Dihydrolipoyl dehydrogenase (LPD).